Consider the following 247-residue polypeptide: tRNA pseudouridine synthase A (247 aa).

D53 (nucleophile) is an active-site residue. Substrate is bound at residue Y111.

This sequence belongs to the tRNA pseudouridine synthase TruA family. As to quaternary structure, homodimer.

The enzyme catalyses uridine(38/39/40) in tRNA = pseudouridine(38/39/40) in tRNA. In terms of biological role, formation of pseudouridine at positions 38, 39 and 40 in the anticodon stem and loop of transfer RNAs. The protein is tRNA pseudouridine synthase A of Bacillus pumilus (strain SAFR-032).